The sequence spans 332 residues: Protein FAM9A (332 aa).

The segment covering 1–13 (MEPVGRKRSRKAA) has biased composition (basic residues). Disordered stretches follow at residues 1 to 114 (MEPV…EHTG) and 186 to 293 (QKDD…PTGV). 2 stretches are compositionally biased toward basic and acidic residues: residues 74–91 (GKDPVRDECEERNPFTET) and 98–114 (DEHGEREPFAEKDEHTG). Residues 196–217 (AAAAAAEAAAAAEAAAAAAEVI) are compositionally biased toward low complexity. The span at 218-275 (VVEDEEEEEKEEEEEKEEEEEEGEEEGGGEEGEEGGGGGEGEETEEEEEEEEEEEEEE) shows a compositional bias: acidic residues. Over residues 276–285 (QIKAFQEKQK) the composition is skewed to basic and acidic residues.

It belongs to the XLR/SYCP3 family. As to expression, expressed exclusively in testis.

The protein resides in the nucleus. It is found in the nucleolus. The protein is Protein FAM9A of Homo sapiens (Human).